A 39-amino-acid chain; its full sequence is L-amino-acid oxidase (39 aa).

Belongs to the flavin monoamine oxidase family. FIG1 subfamily. Monomer. This is in contrast with most of its orthologs, that are non-covalently linked homodimers. FAD serves as cofactor. Post-translationally, N-glycosylated. As to expression, expressed by the venom gland.

It is found in the secreted. It catalyses the reaction an L-alpha-amino acid + O2 + H2O = a 2-oxocarboxylate + H2O2 + NH4(+). The enzyme catalyses L-leucine + O2 + H2O = 4-methyl-2-oxopentanoate + H2O2 + NH4(+). In terms of biological role, catalyzes an oxidative deamination of predominantly hydrophobic and aromatic L-amino acids, thus producing hydrogen peroxide that may contribute to the diverse toxic effects of this enzyme. Shows activity on L-Leu. Exhibits diverse biological activities, such as hemorrhage, hemolysis, edema, apoptosis of vascular endothelial cells or tumor cell lines, and antiparasitic activities, as well as regulation of platelet aggregation. Effects of snake L-amino oxidases on platelets are controversial, since they either induce aggregation or inhibit agonist-induced aggregation. These different effects are probably due to different experimental conditions. In addition, this protein inhibits dose-dependently the growth of Gram-positive, Gram-negative bacteria and yeast, probably by the generation of hydrogen peroxide. This chain is L-amino-acid oxidase, found in Bothrops marajoensis (Marajo lancehead).